The sequence spans 356 residues: Probable scoulerine-9-O-methyltransferase OMT2B (356 aa).

M173 lines the S-adenosyl-L-methionine pocket. D176 provides a ligand contact to substrate. Residues T177, G202, D225, D245–I246, and K259 contribute to the S-adenosyl-L-methionine site. Y260–N264 is a substrate binding site. The Proton acceptor role is filled by H263.

This sequence belongs to the class I-like SAM-binding methyltransferase superfamily. Cation-independent O-methyltransferase family. COMT subfamily.

It catalyses the reaction (S)-scoulerine + S-adenosyl-L-methionine = (S)-tetrahydrocolumbamine + S-adenosyl-L-homocysteine + H(+). It functions in the pathway alkaloid biosynthesis. In terms of biological role, methyltransferase involved in the biosynthesis of the benzylisoquinoline alkaloid noscapine. Catalyzes the conversion of (S)-scoulerine to (S)-tetrahydrocolumbamine. The heterodimers OMT2B-SOMT3 and OMT2B-6OMT do not possess 3-O-acetyl-4'-O-demethylpapaveroxine 4'-O-methyltransferase activity. In Papaver somniferum (Opium poppy), this protein is Probable scoulerine-9-O-methyltransferase OMT2B.